Reading from the N-terminus, the 166-residue chain is Lipoprotein signal peptidase (166 aa).

4 helical membrane-spanning segments follow: residues 10–30 (GGAL…DQLT), 32–52 (IAVL…FFNL), 71–91 (WQRW…CYLL), and 100–120 (FSLS…DRLI). Active-site residues include Asp-126 and Asp-144. The helical transmembrane segment at 135-155 (WHWPAFNLADSAITVGAVLLI) threads the bilayer.

It belongs to the peptidase A8 family.

Its subcellular location is the cell inner membrane. The catalysed reaction is Release of signal peptides from bacterial membrane prolipoproteins. Hydrolyzes -Xaa-Yaa-Zaa-|-(S,diacylglyceryl)Cys-, in which Xaa is hydrophobic (preferably Leu), and Yaa (Ala or Ser) and Zaa (Gly or Ala) have small, neutral side chains.. The protein operates within protein modification; lipoprotein biosynthesis (signal peptide cleavage). Functionally, this protein specifically catalyzes the removal of signal peptides from prolipoproteins. The polypeptide is Lipoprotein signal peptidase (Burkholderia mallei (strain ATCC 23344)).